A 439-amino-acid polypeptide reads, in one-letter code: Xaa-Pro dipeptidase (439 aa).

Residues aspartate 244, aspartate 255, histidine 335, glutamate 380, and glutamate 419 each contribute to the Mn(2+) site.

The protein belongs to the peptidase M24B family. Bacterial-type prolidase subfamily. Mn(2+) serves as cofactor.

It catalyses the reaction Xaa-L-Pro dipeptide + H2O = an L-alpha-amino acid + L-proline. Splits dipeptides with a prolyl residue in the C-terminal position. The protein is Xaa-Pro dipeptidase of Shewanella sediminis (strain HAW-EB3).